Consider the following 684-residue polypeptide: DNA-directed RNA polymerase subunit beta' (684 aa).

Positions 69, 71, 87, and 90 each coordinate Zn(2+). Positions 489, 491, and 493 each coordinate Mg(2+).

This sequence belongs to the RNA polymerase beta' chain family. RpoC1 subfamily. As to quaternary structure, in plastids the minimal PEP RNA polymerase catalytic core is composed of four subunits: alpha, beta, beta', and beta''. When a (nuclear-encoded) sigma factor is associated with the core the holoenzyme is formed, which can initiate transcription. It depends on Mg(2+) as a cofactor. The cofactor is Zn(2+).

The protein localises to the plastid. Its subcellular location is the chloroplast. It carries out the reaction RNA(n) + a ribonucleoside 5'-triphosphate = RNA(n+1) + diphosphate. In terms of biological role, DNA-dependent RNA polymerase catalyzes the transcription of DNA into RNA using the four ribonucleoside triphosphates as substrates. The sequence is that of DNA-directed RNA polymerase subunit beta' from Marchantia polymorpha (Common liverwort).